A 238-amino-acid chain; its full sequence is Ribonuclease PH (238 aa).

Residues R86 and 124-126 each bind phosphate; that span reads GTR.

Belongs to the RNase PH family. In terms of assembly, homohexameric ring arranged as a trimer of dimers.

The catalysed reaction is tRNA(n+1) + phosphate = tRNA(n) + a ribonucleoside 5'-diphosphate. In terms of biological role, phosphorolytic 3'-5' exoribonuclease that plays an important role in tRNA 3'-end maturation. Removes nucleotide residues following the 3'-CCA terminus of tRNAs; can also add nucleotides to the ends of RNA molecules by using nucleoside diphosphates as substrates, but this may not be physiologically important. Probably plays a role in initiation of 16S rRNA degradation (leading to ribosome degradation) during starvation. The protein is Ribonuclease PH of Hahella chejuensis (strain KCTC 2396).